The following is a 347-amino-acid chain: NADH-ubiquinone oxidoreductase chain 2 (347 aa).

11 helical membrane-spanning segments follow: residues 5–22, 26–45, 60–80, 96–116, 122–142, 153–173, 178–198, 200–220, 237–257, 274–294, and 325–345; these read ILIT…IVLF, WFMI…PILM, FLTQ…NLLC, TMIT…FWVP, ISLS…LSIL, LLLM…LNQT, ILAY…VYNP, LAIL…MLFM, FPLM…LPPL, DMII…YFYT, and LLAP…MLAA.

Belongs to the complex I subunit 2 family. Core subunit of respiratory chain NADH dehydrogenase (Complex I) which is composed of 45 different subunits. Interacts with TMEM242.

It is found in the mitochondrion inner membrane. The enzyme catalyses a ubiquinone + NADH + 5 H(+)(in) = a ubiquinol + NAD(+) + 4 H(+)(out). Its function is as follows. Core subunit of the mitochondrial membrane respiratory chain NADH dehydrogenase (Complex I) which catalyzes electron transfer from NADH through the respiratory chain, using ubiquinone as an electron acceptor. Essential for the catalytic activity and assembly of complex I. This is NADH-ubiquinone oxidoreductase chain 2 from Ailuropoda melanoleuca (Giant panda).